Reading from the N-terminus, the 273-residue chain is Putative pyruvate, phosphate dikinase regulatory protein (273 aa).

153 to 160 is a binding site for ADP; that stretch reads GISRTSKT.

This sequence belongs to the pyruvate, phosphate/water dikinase regulatory protein family. PDRP subfamily.

The enzyme catalyses N(tele)-phospho-L-histidyl/L-threonyl-[pyruvate, phosphate dikinase] + ADP = N(tele)-phospho-L-histidyl/O-phospho-L-threonyl-[pyruvate, phosphate dikinase] + AMP + H(+). It catalyses the reaction N(tele)-phospho-L-histidyl/O-phospho-L-threonyl-[pyruvate, phosphate dikinase] + phosphate + H(+) = N(tele)-phospho-L-histidyl/L-threonyl-[pyruvate, phosphate dikinase] + diphosphate. In terms of biological role, bifunctional serine/threonine kinase and phosphorylase involved in the regulation of the pyruvate, phosphate dikinase (PPDK) by catalyzing its phosphorylation/dephosphorylation. In Rhizobium etli (strain CIAT 652), this protein is Putative pyruvate, phosphate dikinase regulatory protein.